The chain runs to 258 residues: L-aspartate dehydrogenase 1 (258 aa).

The NAD(+) site is built by Ala121 and Asn181. The active site involves His211.

Belongs to the L-aspartate dehydrogenase family.

It catalyses the reaction L-aspartate + NADP(+) + H2O = oxaloacetate + NH4(+) + NADPH + H(+). The enzyme catalyses L-aspartate + NAD(+) + H2O = oxaloacetate + NH4(+) + NADH + H(+). It functions in the pathway cofactor biosynthesis; NAD(+) biosynthesis; iminoaspartate from L-aspartate (dehydrogenase route): step 1/1. Its function is as follows. Specifically catalyzes the NAD or NADP-dependent dehydrogenation of L-aspartate to iminoaspartate. This Bordetella bronchiseptica (strain ATCC BAA-588 / NCTC 13252 / RB50) (Alcaligenes bronchisepticus) protein is L-aspartate dehydrogenase 1.